The primary structure comprises 173 residues: Crossover junction endodeoxyribonuclease RuvC (173 aa).

Residues aspartate 8, glutamate 67, and aspartate 139 contribute to the active site. Residues aspartate 8, glutamate 67, and aspartate 139 each contribute to the Mg(2+) site.

The protein belongs to the RuvC family. Homodimer which binds Holliday junction (HJ) DNA. The HJ becomes 2-fold symmetrical on binding to RuvC with unstacked arms; it has a different conformation from HJ DNA in complex with RuvA. In the full resolvosome a probable DNA-RuvA(4)-RuvB(12)-RuvC(2) complex forms which resolves the HJ. Mg(2+) serves as cofactor.

The protein resides in the cytoplasm. The catalysed reaction is Endonucleolytic cleavage at a junction such as a reciprocal single-stranded crossover between two homologous DNA duplexes (Holliday junction).. Functionally, the RuvA-RuvB-RuvC complex processes Holliday junction (HJ) DNA during genetic recombination and DNA repair. Endonuclease that resolves HJ intermediates. Cleaves cruciform DNA by making single-stranded nicks across the HJ at symmetrical positions within the homologous arms, yielding a 5'-phosphate and a 3'-hydroxyl group; requires a central core of homology in the junction. The consensus cleavage sequence is 5'-(A/T)TT(C/G)-3'. Cleavage occurs on the 3'-side of the TT dinucleotide at the point of strand exchange. HJ branch migration catalyzed by RuvA-RuvB allows RuvC to scan DNA until it finds its consensus sequence, where it cleaves and resolves the cruciform DNA. This Vibrio cholerae serotype O1 (strain ATCC 39541 / Classical Ogawa 395 / O395) protein is Crossover junction endodeoxyribonuclease RuvC.